A 335-amino-acid chain; its full sequence is Pyridoxal 5'-phosphate synthase subunit PdxS (335 aa).

D30 provides a ligand contact to D-ribose 5-phosphate. K87 serves as the catalytic Schiff-base intermediate with D-ribose 5-phosphate. G159 is a D-ribose 5-phosphate binding site. R171 contributes to the D-glyceraldehyde 3-phosphate binding site. Residues G257 and 278 to 279 (GS) contribute to the D-ribose 5-phosphate site.

Belongs to the PdxS/SNZ family. Homohexamer. In the presence of PdxT, forms a dodecamer of heterodimers.

It catalyses the reaction aldehydo-D-ribose 5-phosphate + D-glyceraldehyde 3-phosphate + L-glutamine = pyridoxal 5'-phosphate + L-glutamate + phosphate + 3 H2O + H(+). It functions in the pathway cofactor biosynthesis; pyridoxal 5'-phosphate biosynthesis. Functionally, catalyzes the formation of pyridoxal 5'-phosphate from ribose 5-phosphate (RBP), glyceraldehyde 3-phosphate (G3P) and ammonia. The ammonia is provided by the PdxT subunit. Can also use ribulose 5-phosphate and dihydroxyacetone phosphate as substrates, resulting from enzyme-catalyzed isomerization of RBP and G3P, respectively. In Pyrococcus horikoshii (strain ATCC 700860 / DSM 12428 / JCM 9974 / NBRC 100139 / OT-3), this protein is Pyridoxal 5'-phosphate synthase subunit PdxS.